The following is a 480-amino-acid chain: Voltage-gated potassium channel regulatory subunit KCNG2 (480 aa).

2 disordered regions span residues 1–25 (MARLPGHPEVPGAEPGSAVRGGRGG) and 144–167 (AAEARATPPARGPQTSPGRALGSG). Residues 1 to 187 (MARLPGHPEV…DVVENPHSGL (187 aa)) are Cytoplasmic-facing. A helical transmembrane segment spans residues 188–209 (AGKLFAYVSVAFVAVTAVGLCL). The Extracellular segment spans residues 210–230 (STMPDVRAEEERGECSTKCRN). The helical transmembrane segment at 231–252 (LFVLETVCVAWFSFEFLLRSLQ) threads the bilayer. Over 253–263 (AESKCAFLRTP) the chain is Cytoplasmic. Residues 264–284 (LAIIDILAILPFYVSLLAGLA) form a helical membrane-spanning segment. The Extracellular segment spans residues 285–296 (AGPTGSKMLERA). Residues 297–317 (GLVLRLLRALRVLYVMRLARH) traverse the membrane as a helical; Voltage-sensor segment. The Cytoplasmic portion of the chain corresponds to 318–332 (SLGLRSLGLTVRRCA). The helical transmembrane segment at 333–354 (REFGLLLLFLCVAMALFAPLVH) threads the bilayer. Residues 355 to 369 (LAERELGAHRDFSSV) lie on the Extracellular side of the membrane. Positions 370 to 381 (PASYWWAVISMT) form an intramembrane region, helical. A Selectivity filter motif is present at residues 382–387 (TVGYGD). Residues 382 to 389 (TVGYGDMV) lie within the membrane without spanning it. Residues 390–396 (PRSLPGQ) lie on the Extracellular side of the membrane. The helical transmembrane segment at 397 to 425 (VVALSSILSGILLMAFPVTSIFHTFSRSY) threads the bilayer. Residues 426–480 (SELKEQQQRAASPEPVLREDSTRDDSTRSASATEDSSQDPETAGAAGSLPGPVGP) are Cytoplasmic-facing. The segment at 429-480 (KEQQQRAASPEPVLREDSTRDDSTRSASATEDSSQDPETAGAAGSLPGPVGP) is disordered. A compositionally biased stretch (basic and acidic residues) spans 441–452 (VLREDSTRDDST).

It belongs to the potassium channel family. G (TC 1.A.1.2) subfamily. Kv6.2/KCNG2 sub-subfamily. In terms of assembly, heterodimer with KCNB1. As to expression, highly expressed in heart, in particular in right and left atrium, and detected at lower levels in the right and left ventricle.

It localises to the cell membrane. Regulatory alpha-subunit of the voltage-gated potassium (Kv) channel which, when coassembled with KCNB1, can modulate the kinetics and conductance-voltage relationship. Modulates channel activity by shifting the threshold and the half-maximal activation to more negative values. Potassium channel subunit that does not form functional channels by itself. This is Voltage-gated potassium channel regulatory subunit KCNG2 from Rattus norvegicus (Rat).